We begin with the raw amino-acid sequence, 51 residues long: U-Asilidin(1)-Eru1a (51 aa).

A signal peptide spans 1 to 23 (MANYIDVLSFLAIICATVLATLA). 3 cysteine pairs are disulfide-bonded: Cys26–Cys40, Cys33–Cys44, and Cys39–Cys49.

This sequence belongs to the asilidin-1 family. In terms of tissue distribution, expressed by the venom gland. The most highly expressed peptides U-Asilidin1-Mar1a is around 3000 times higher expressed in the venom thoracic glands compared to its body tissues.

It localises to the secreted. Induces neurotoxic effect on honeybees, including slow movements, disorientation and paralysis. Since it provokes similar symptoms than omega-atracotoxin, it is probable that it acts in the same way by inhibiting voltage-gated calcium channels. The sequence is that of U-Asilidin(1)-Eru1a from Eutolmus rufibarbis (Golden-tabbed robberfly).